The chain runs to 156 residues: Arginine repressor (156 aa).

The protein belongs to the ArgR family.

It is found in the cytoplasm. It functions in the pathway amino-acid biosynthesis; L-arginine biosynthesis [regulation]. Functionally, regulates arginine biosynthesis genes. The chain is Arginine repressor from Aeromonas hydrophila subsp. hydrophila (strain ATCC 7966 / DSM 30187 / BCRC 13018 / CCUG 14551 / JCM 1027 / KCTC 2358 / NCIMB 9240 / NCTC 8049).